We begin with the raw amino-acid sequence, 120 residues long: Ribonuclease P protein component (120 aa).

Belongs to the RnpA family. As to quaternary structure, consists of a catalytic RNA component (M1 or rnpB) and a protein subunit.

The enzyme catalyses Endonucleolytic cleavage of RNA, removing 5'-extranucleotides from tRNA precursor.. RNaseP catalyzes the removal of the 5'-leader sequence from pre-tRNA to produce the mature 5'-terminus. It can also cleave other RNA substrates such as 4.5S RNA. The protein component plays an auxiliary but essential role in vivo by binding to the 5'-leader sequence and broadening the substrate specificity of the ribozyme. The polypeptide is Ribonuclease P protein component (Rickettsia bellii (strain RML369-C)).